The chain runs to 1349 residues: Aldehyde oxidase 2 (1349 aa).

Residues 8-96 (DELVFFVNGR…GAAVTTVEGV (89 aa)) form the 2Fe-2S ferredoxin-type domain. [2Fe-2S] cluster-binding residues include cysteine 47, cysteine 52, cysteine 55, and cysteine 78. Glutamine 117 contributes to the Mo-molybdopterin binding site. [2Fe-2S] cluster is bound by residues cysteine 118, cysteine 121, cysteine 153, and cysteine 155. Cysteine 155 lines the Mo-molybdopterin pocket. The 186-residue stretch at 240 to 425 (FYGERVTWIS…ESVHIPHSQK (186 aa)) folds into the FAD-binding PCMH-type domain. Residues 268–275 (LVVGNTSL), alanine 349, serine 358, histidine 362, aspartate 371, and leucine 415 each bind FAD. Mo-molybdopterin contacts are provided by residues 816–817 (GF), 1098–1101 (ASVG), glutamine 1213, and leucine 1278. Catalysis depends on glutamate 1280, which acts as the Proton acceptor; for azaheterocycle hydroxylase activity.

Belongs to the xanthine dehydrogenase family. In terms of assembly, homodimer. The cofactor is [2Fe-2S] cluster. Requires FAD as cofactor. Mo-molybdopterin is required as a cofactor. As to expression, only detected at very few levels in nasal mucosa.

It is found in the cytoplasm. It catalyses the reaction an aldehyde + O2 + H2O = a carboxylate + H2O2 + H(+). Its function is as follows. Oxidase with broad substrate specificity, oxidizing aromatic azaheterocycles, such as phthalazine, as well as aldehydes, such as benzaldehyde and retinal. The polypeptide is Aldehyde oxidase 2 (AOX2) (Macaca fascicularis (Crab-eating macaque)).